Here is a 114-residue protein sequence, read N- to C-terminus: MEESAGTPFHDPKYFVSPFILNTDEGRYLVLKAIKLCNVRTIDCMKQETSCVLKVDKPQSPCPISSSDSAPKCYMQQTSPQQQRQAPQLRFINTGALSNLFANTTDKAARVINQ.

The interval 58-86 (PQSPCPISSSDSAPKCYMQQTSPQQQRQA) is disordered. Serine 60 and serine 69 each carry phosphoserine. Residues 76-86 (QQTSPQQQRQA) are compositionally biased toward low complexity.

The protein belongs to the orthopoxvirus OPG062 family. As to quaternary structure, self-associates to form high molecular-weight forms. Interacts with protein OPG157. Interacts with host RICTOR and RPTOR; these interactions disrupt the mTORC1 and mTORC2 crosstalk. In terms of processing, phosphorylated on two serines.

It localises to the virion. In terms of biological role, plays an essential role in virion assembly and morphogenesis. Also plays a role in the inhibition of host immune response by dysregulating mTOR. Sequesters host RICTOR and RPTOR, thereby disrupting mTORC1 and mTORC2 crosstalk. In turn, blocks the host antiviral response in part through mTOR-dependent degradation of cGAS, the primary poxvirus sensor. This Vertebrata (FPV) protein is Phosphoprotein OPG062 (OPG062).